A 205-amino-acid chain; its full sequence is Holliday junction resolvase RecU (205 aa).

The tract at residues Met1–Thr22 is disordered. Residues Thr90, Asp92, Asp105, and Gln124 each coordinate Mg(2+).

It belongs to the RecU family. The cofactor is Mg(2+).

It localises to the cytoplasm. It carries out the reaction Endonucleolytic cleavage at a junction such as a reciprocal single-stranded crossover between two homologous DNA duplexes (Holliday junction).. In terms of biological role, endonuclease that resolves Holliday junction intermediates in genetic recombination. Cleaves mobile four-strand junctions by introducing symmetrical nicks in paired strands. Promotes annealing of linear ssDNA with homologous dsDNA. Required for DNA repair, homologous recombination and chromosome segregation. This is Holliday junction resolvase RecU from Leuconostoc citreum (strain KM20).